A 916-amino-acid polypeptide reads, in one-letter code: Protein translocase subunit SecA (916 aa).

Residues Gln87, 105–109, and Asp512 contribute to the ATP site; that span reads GEGKT. The disordered stretch occupies residues 857 to 916; the sequence is QHAEAPSMEQAVAGEEEELPEGPAPVVPLEPVRNEQKIGRNEPCPCGSGKKYKHCHGQLD. Cys900, Cys902, Cys911, and His912 together coordinate Zn(2+). The segment covering 906–916 has biased composition (basic residues); that stretch reads KKYKHCHGQLD.

It belongs to the SecA family. As to quaternary structure, monomer and homodimer. Part of the essential Sec protein translocation apparatus which comprises SecA, SecYEG and auxiliary proteins SecDF-YajC and YidC. Requires Zn(2+) as cofactor.

The protein localises to the cell inner membrane. It is found in the cytoplasm. The catalysed reaction is ATP + H2O + cellular proteinSide 1 = ADP + phosphate + cellular proteinSide 2.. Its function is as follows. Part of the Sec protein translocase complex. Interacts with the SecYEG preprotein conducting channel. Has a central role in coupling the hydrolysis of ATP to the transfer of proteins into and across the cell membrane, serving both as a receptor for the preprotein-SecB complex and as an ATP-driven molecular motor driving the stepwise translocation of polypeptide chains across the membrane. This is Protein translocase subunit SecA from Pseudomonas aeruginosa (strain LESB58).